The chain runs to 686 residues: Acyl-CoA synthetase short-chain family member 3, mitochondrial (686 aa).

The transit peptide at 1–29 (MKPSWLQCRKVTSAGGLGGPLPGSSPARG) directs the protein to the mitochondrion. Position 227-230 (227-230 (EPGR)) interacts with CoA. ATP-binding positions include 425-427 (GER) and 446-451 (DHWWQT). N6-succinyllysine is present on Lys518. The residue at position 524 (Lys524) is an N6-acetyllysine. Positions 539, 554, and 565 each coordinate ATP. Arg624 provides a ligand contact to CoA.

The protein belongs to the ATP-dependent AMP-binding enzyme family.

Its subcellular location is the mitochondrion matrix. It catalyses the reaction acetate + ATP + CoA = acetyl-CoA + AMP + diphosphate. The catalysed reaction is propanoate + ATP + CoA = propanoyl-CoA + AMP + diphosphate. It carries out the reaction butanoate + ATP + CoA = butanoyl-CoA + AMP + diphosphate. Catalyzes the synthesis of acetyl-CoA from short-chain fatty acids. Propionate is the preferred substrate. Can utilize acetate and butyrate with a much lower affinity. The sequence is that of Acyl-CoA synthetase short-chain family member 3, mitochondrial (ACSS3) from Homo sapiens (Human).